We begin with the raw amino-acid sequence, 86 residues long: Large ribosomal subunit protein bL27 (86 aa).

A disordered region spans residues 1–24 (MAHKKGTGSTRNGRDSNSKRLGVK).

Belongs to the bacterial ribosomal protein bL27 family.

The chain is Large ribosomal subunit protein bL27 from Prochlorococcus marinus (strain MIT 9301).